The following is a 338-amino-acid chain: NAC domain-containing protein 46 (338 aa).

Residues 20-171 form the NAC domain; that stretch reads LPPGFRFHPT…EWVVCRVFHK (152 aa). Residues 118 to 177 mediate DNA binding; that stretch reads VGMKKTLVFYTGRAPKGEKTNWVMHEYRLDGKYSYHNLPKTARDEWVVCRVFHKNAPSTT.

Interacts with RCD1.

It is found in the nucleus. Transcriptional activator that acts as a positive regulator of leaf senescence. Activates NYC1, SGR1, SGR2 and PAO, which are genes involved in chlorophyll catabolic processes. Activates senescence-associated genes, such as RNS1, SAG12 and SAG13. The protein is NAC domain-containing protein 46 of Arabidopsis thaliana (Mouse-ear cress).